A 131-amino-acid chain; its full sequence is Classical arabinogalactan protein 2 (131 aa).

The N-terminal stretch at 1–21 (MNSKAMQALIFLGFLATSCLA) is a signal peptide. Glutamine 22 carries the pyrrolidone carboxylic acid modification. A 4-hydroxyproline mark is found at proline 24, proline 26, proline 28, proline 34, and proline 35. Residues proline 24, proline 26, proline 28, proline 34, and proline 35 are each glycosylated (O-linked (Ara...) hydroxyproline). Residues 24–106 (PAPAPTTVTP…PGPDGAADAP (83 aa)) form a disordered region. Pro residues-rich tracts occupy residues 25–38 (APAPTTVTPPPTAL) and 49–64 (IASPPVPVNEPTPAPT). Low complexity-rich tracts occupy residues 65–76 (TSPTTSPVASPP) and 90–106 (TPTSSPAPGPDGAADAP). Serine 107 is lipidated: GPI-anchor amidated serine. A propeptide spans 108–131 (AAWANKAFLVGTAVAGALYAVVLA) (removed in mature form).

It belongs to the classical AGP family. Post-translationally, O-glycosylated on hydroxyprolines; noncontiguous hydroxylproline residues are glycosylated with arabinogalactan.

The protein resides in the cell membrane. Its function is as follows. Proteoglycan that seems to be implicated in diverse developmental roles such as differentiation, cell-cell recognition, embryogenesis and programmed cell death. In Arabidopsis thaliana (Mouse-ear cress), this protein is Classical arabinogalactan protein 2 (AGP2).